The sequence spans 98 residues: DNA-binding protein Fis (98 aa).

A DNA-binding region (H-T-H motif) is located at residues 74–93; the sequence is QTRAALMMGINRGTLRKKLK.

The protein belongs to the transcriptional regulatory Fis family. As to quaternary structure, homodimer.

In terms of biological role, activates ribosomal RNA transcription. Plays a direct role in upstream activation of rRNA promoters. This Enterobacter sp. (strain 638) protein is DNA-binding protein Fis.